Here is a 432-residue protein sequence, read N- to C-terminus: Asparagine--tRNA ligase 2 (432 aa).

This sequence belongs to the class-II aminoacyl-tRNA synthetase family. In terms of assembly, homodimer.

It is found in the cytoplasm. The catalysed reaction is tRNA(Asn) + L-asparagine + ATP = L-asparaginyl-tRNA(Asn) + AMP + diphosphate + H(+). In Lactiplantibacillus plantarum (strain ATCC BAA-793 / NCIMB 8826 / WCFS1) (Lactobacillus plantarum), this protein is Asparagine--tRNA ligase 2 (asnS2).